The following is a 269-amino-acid chain: MPELPEVEVSRMGITPHLLNQTIQSLIFRTPKLRWVIPSELKKLQGQVIRHIGRRAKYLIIETDVGSAIVHLGMSGSLRVLDADFPAGKHDHVDLKLSNGKVLRYNDPRRFGAWLYAAPGEDHDVLGNIGPEPLTDAFDGQYMFEKAQGKRVAVKQFIMDNKIVVGVGNIYASESLFRSRILPTRATMSLSAEEWQRLVSHIKQTLQTAIEQGGTTLKDFSQADGKPGYFAQELQVYGKAGESCPECGEAIQELKIGQRNTFYCSYCQC.

Proline 2 acts as the Schiff-base intermediate with DNA in catalysis. Catalysis depends on glutamate 3, which acts as the Proton donor. Lysine 57 serves as the catalytic Proton donor; for beta-elimination activity. The DNA site is built by histidine 90, arginine 109, and lysine 150. The FPG-type zinc-finger motif lies at glutamine 235 to cysteine 269. Residue arginine 259 is the Proton donor; for delta-elimination activity of the active site.

The protein belongs to the FPG family. In terms of assembly, monomer. Zn(2+) serves as cofactor.

The catalysed reaction is Hydrolysis of DNA containing ring-opened 7-methylguanine residues, releasing 2,6-diamino-4-hydroxy-5-(N-methyl)formamidopyrimidine.. It catalyses the reaction 2'-deoxyribonucleotide-(2'-deoxyribose 5'-phosphate)-2'-deoxyribonucleotide-DNA = a 3'-end 2'-deoxyribonucleotide-(2,3-dehydro-2,3-deoxyribose 5'-phosphate)-DNA + a 5'-end 5'-phospho-2'-deoxyribonucleoside-DNA + H(+). Involved in base excision repair of DNA damaged by oxidation or by mutagenic agents. Acts as a DNA glycosylase that recognizes and removes damaged bases. Has a preference for oxidized purines, such as 7,8-dihydro-8-oxoguanine (8-oxoG). Has AP (apurinic/apyrimidinic) lyase activity and introduces nicks in the DNA strand. Cleaves the DNA backbone by beta-delta elimination to generate a single-strand break at the site of the removed base with both 3'- and 5'-phosphates. This chain is Formamidopyrimidine-DNA glycosylase, found in Vibrio vulnificus (strain YJ016).